The following is a 157-amino-acid chain: Nucleoside diphosphate kinase (157 aa).

Residues Lys12, Phe60, Arg88, Thr94, and Arg105 each contribute to the ATP site. Residue His121 is the Pros-phosphohistidine intermediate of the active site.

It belongs to the NDK family. It depends on Mg(2+) as a cofactor.

It is found in the cytoplasm. It catalyses the reaction a 2'-deoxyribonucleoside 5'-diphosphate + ATP = a 2'-deoxyribonucleoside 5'-triphosphate + ADP. The catalysed reaction is a ribonucleoside 5'-diphosphate + ATP = a ribonucleoside 5'-triphosphate + ADP. In terms of biological role, major role in the synthesis of nucleoside triphosphates other than ATP. The ATP gamma phosphate is transferred to the NDP beta phosphate via a ping-pong mechanism, using a phosphorylated active-site intermediate. This Pyrococcus horikoshii (strain ATCC 700860 / DSM 12428 / JCM 9974 / NBRC 100139 / OT-3) protein is Nucleoside diphosphate kinase.